Here is a 305-residue protein sequence, read N- to C-terminus: GMP synthase [glutamine-hydrolyzing] subunit B (305 aa).

Residues 2–184 (VKTEKFIQKS…LGLPPEIQHR (183 aa)) enclose the GMPS ATP-PPase domain. 29–35 (SGGVDSS) provides a ligand contact to ATP.

As to quaternary structure, heterodimer composed of a glutamine amidotransferase subunit (A) and a GMP-binding subunit (B).

It catalyses the reaction XMP + L-glutamine + ATP + H2O = GMP + L-glutamate + AMP + diphosphate + 2 H(+). The protein operates within purine metabolism; GMP biosynthesis; GMP from XMP (L-Gln route): step 1/1. In terms of biological role, catalyzes the synthesis of GMP from XMP. In Methanoregula boonei (strain DSM 21154 / JCM 14090 / 6A8), this protein is GMP synthase [glutamine-hydrolyzing] subunit B.